The chain runs to 208 residues: MIYVVPDLLEEIFLGLPLKSILRFKTVSKQWRSILESKSFAERRLNVEKKEKILAVGDRTELGFEGEEEIQMVYLHCDIDATRPSLTCEGLVCIPAPGWINVLNPSTRQLRRFPCSPNHHVPSDRIRFQFRDELYLTSFPGNWEMGFGRDKFNGSYKVVRMCFSPVEKCEVLDVETGEWSELNPPPNDIDVGRKSVCVNGSIYWLKNV.

The region spanning 1 to 44 (MIYVVPDLLEEIFLGLPLKSILRFKTVSKQWRSILESKSFAERR) is the F-box domain. The stretch at 149–200 (RDKFNGSYKVVRMCFSPVEKCEVLDVETGEWSELNPPPNDIDVGRKSVCVNG) is one Kelch repeat.

This chain is F-box/kelch-repeat protein At2g43270, found in Arabidopsis thaliana (Mouse-ear cress).